We begin with the raw amino-acid sequence, 335 residues long: Pyridoxal 5'-phosphate synthase subunit PdxS (335 aa).

Position 30 (D30) interacts with D-ribose 5-phosphate. The active-site Schiff-base intermediate with D-ribose 5-phosphate is the K87. G159 contributes to the D-ribose 5-phosphate binding site. R171 provides a ligand contact to D-glyceraldehyde 3-phosphate. D-ribose 5-phosphate-binding positions include G257 and 278-279; that span reads GS.

Belongs to the PdxS/SNZ family. As to quaternary structure, homohexamer. In the presence of PdxT, forms a dodecamer of heterodimers.

The enzyme catalyses aldehydo-D-ribose 5-phosphate + D-glyceraldehyde 3-phosphate + L-glutamine = pyridoxal 5'-phosphate + L-glutamate + phosphate + 3 H2O + H(+). The protein operates within cofactor biosynthesis; pyridoxal 5'-phosphate biosynthesis. Functionally, catalyzes the formation of pyridoxal 5'-phosphate from ribose 5-phosphate (RBP), glyceraldehyde 3-phosphate (G3P) and ammonia. The ammonia is provided by the PdxT subunit. Can also use ribulose 5-phosphate and dihydroxyacetone phosphate as substrates, resulting from enzyme-catalyzed isomerization of RBP and G3P, respectively. This Pyrococcus horikoshii (strain ATCC 700860 / DSM 12428 / JCM 9974 / NBRC 100139 / OT-3) protein is Pyridoxal 5'-phosphate synthase subunit PdxS.